Consider the following 229-residue polypeptide: Probable U3 small nucleolar RNA-associated protein 11 (229 aa).

2 disordered regions span residues 1–23 (MSSL…ESRK) and 199–229 (KKPG…QRKR).

The protein belongs to the UTP11 family. As to quaternary structure, component of the ribosomal small subunit (SSU) processome.

The protein localises to the nucleus. It localises to the nucleolus. Involved in nucleolar processing of pre-18S ribosomal RNA. This chain is Probable U3 small nucleolar RNA-associated protein 11, found in Oryza sativa subsp. japonica (Rice).